We begin with the raw amino-acid sequence, 286 residues long: Phosphatidylserine decarboxylase proenzyme (286 aa).

Active-site charge relay system; for autoendoproteolytic cleavage activity residues include Asp90, His147, and Ser252. Ser252 functions as the Schiff-base intermediate with substrate; via pyruvic acid; for decarboxylase activity in the catalytic mechanism. Ser252 bears the Pyruvic acid (Ser); by autocatalysis mark.

This sequence belongs to the phosphatidylserine decarboxylase family. PSD-B subfamily. Prokaryotic type I sub-subfamily. In terms of assembly, heterodimer of a large membrane-associated beta subunit and a small pyruvoyl-containing alpha subunit. Pyruvate is required as a cofactor. In terms of processing, is synthesized initially as an inactive proenzyme. Formation of the active enzyme involves a self-maturation process in which the active site pyruvoyl group is generated from an internal serine residue via an autocatalytic post-translational modification. Two non-identical subunits are generated from the proenzyme in this reaction, and the pyruvate is formed at the N-terminus of the alpha chain, which is derived from the carboxyl end of the proenzyme. The autoendoproteolytic cleavage occurs by a canonical serine protease mechanism, in which the side chain hydroxyl group of the serine supplies its oxygen atom to form the C-terminus of the beta chain, while the remainder of the serine residue undergoes an oxidative deamination to produce ammonia and the pyruvoyl prosthetic group on the alpha chain. During this reaction, the Ser that is part of the protease active site of the proenzyme becomes the pyruvoyl prosthetic group, which constitutes an essential element of the active site of the mature decarboxylase.

The protein localises to the cell membrane. The catalysed reaction is a 1,2-diacyl-sn-glycero-3-phospho-L-serine + H(+) = a 1,2-diacyl-sn-glycero-3-phosphoethanolamine + CO2. It participates in phospholipid metabolism; phosphatidylethanolamine biosynthesis; phosphatidylethanolamine from CDP-diacylglycerol: step 2/2. Functionally, catalyzes the formation of phosphatidylethanolamine (PtdEtn) from phosphatidylserine (PtdSer). This is Phosphatidylserine decarboxylase proenzyme from Azotobacter vinelandii (strain DJ / ATCC BAA-1303).